Reading from the N-terminus, the 92-residue chain is Conotoxin Im9.4 (92 aa).

An N-terminal signal peptide occupies residues 1–20 (MHRSLAGSAVLMLLLLFALG). Residues 21–62 (NFVGVQPGLVTRDADNGQLMDNRRNLRLERKTMSLFKSLDKR) constitute a propeptide that is removed on maturation. Disulfide bonds link Cys65/Cys79, Cys69/Cys81, and Cys75/Cys87. Asn90 is modified (asparagine amide).

This sequence belongs to the conotoxin P superfamily. As to expression, expressed by the venom duct.

The protein localises to the secreted. Its function is as follows. Probable neurotoxin that inhibits ion channels. This chain is Conotoxin Im9.4, found in Conus imperialis (Imperial cone).